A 149-amino-acid chain; its full sequence is NPC intracellular cholesterol transporter 2 (149 aa).

An N-terminal signal peptide occupies residues 1–19 (MHFLAAAFLLLTLSASALA). Disulfide bonds link C27–C140, C42–C47, and C93–C99. Residue N58 is glycosylated (N-linked (GlcNAc...) asparagine). K116 carries the post-translational modification N6-acetyllysine.

It belongs to the NPC2 family. In terms of assembly, interacts with NPC1 (via the second lumenal domain) in a cholestrol-dependent manner. Interacts with NUS1/NgBR, the interaction stabilizes NCP2 and regulates cholesterol trafficking. Interacts with DHDDS. Interacts with NEDD4L (via C2 domain). Interacts with NPC1L1. N-glycosylated. Found in the epididymal fluid as a 19 kDa glycoprotein that is processed during its passage through the epididymis into a 16 kDa protein. Found in the fluid from the distal caput to cauda epididymis, not detected in the rete testis and the proximal and middle caput epididymal fluids (at protein level).

Its subcellular location is the secreted. The protein localises to the endoplasmic reticulum. It localises to the lysosome. It carries out the reaction cholesterol(in) = cholesterol(out). In terms of biological role, intracellular cholesterol transporter which acts in concert with NPC1 and plays an important role in the egress of cholesterol from the lysosomal compartment. Unesterified cholesterol that has been released from LDLs in the lumen of the late endosomes/lysosomes is transferred by NPC2 to the cholesterol-binding pocket in the N-terminal domain of NPC1. May bind and mobilize cholesterol that is associated with membranes. NPC2 binds cholesterol with a 1:1 stoichiometry. Can bind a variety of sterols, including lathosterol, desmosterol and the plant sterols stigmasterol and beta-sitosterol. The secreted form of NCP2 regulates biliary cholesterol secretion via stimulation of ABCG5/ABCG8-mediated cholesterol transport. The protein is NPC intracellular cholesterol transporter 2 of Sus scrofa (Pig).